A 391-amino-acid chain; its full sequence is Chaperone protein DnaJ (391 aa).

One can recognise a J domain in the interval 2 to 67; sequence DYYDVLGVSK…QKRESYDRYG (66 aa). Residues 148 to 226 form a CR-type zinc finger; the sequence is GVEKELLVSG…CRGQGRVKDK (79 aa). 8 residues coordinate Zn(2+): C161, C164, C178, C181, C200, C203, C214, and C217. CXXCXGXG motif repeat units follow at residues 161–168, 178–185, 200–207, and 214–221; these read CTTCSGSG, CERCKGSG, CPECGGEG, and CSNCRGQG.

The protein belongs to the DnaJ family. As to quaternary structure, homodimer. Requires Zn(2+) as cofactor.

It is found in the cytoplasm. Functionally, participates actively in the response to hyperosmotic and heat shock by preventing the aggregation of stress-denatured proteins and by disaggregating proteins, also in an autonomous, DnaK-independent fashion. Unfolded proteins bind initially to DnaJ; upon interaction with the DnaJ-bound protein, DnaK hydrolyzes its bound ATP, resulting in the formation of a stable complex. GrpE releases ADP from DnaK; ATP binding to DnaK triggers the release of the substrate protein, thus completing the reaction cycle. Several rounds of ATP-dependent interactions between DnaJ, DnaK and GrpE are required for fully efficient folding. Also involved, together with DnaK and GrpE, in the DNA replication of plasmids through activation of initiation proteins. This Chlamydia felis (strain Fe/C-56) (Chlamydophila felis) protein is Chaperone protein DnaJ.